The sequence spans 86 residues: UPF0180 protein CA_C1486 (86 aa).

The protein belongs to the UPF0180 family.

The protein is UPF0180 protein CA_C1486 of Clostridium acetobutylicum (strain ATCC 824 / DSM 792 / JCM 1419 / IAM 19013 / LMG 5710 / NBRC 13948 / NRRL B-527 / VKM B-1787 / 2291 / W).